A 523-amino-acid polypeptide reads, in one-letter code: Polypyrimidine tract-binding protein 3 (523 aa).

Residues 1–25 form a disordered region; the sequence is MNNSTSAGVYANGNDNKKFKGDRPP. RRM domains follow at residues 30–114, 153–229, and 329–403; these read RVLH…NLPN, LRII…FSKL, and SVLL…LSKH. Lys36 participates in a covalent cross-link: Glycyl lysine isopeptide (Lys-Gly) (interchain with G-Cter in SUMO2). At Tyr98 the chain carries Phosphotyrosine. Thr109 carries the post-translational modification Phosphothreonine. Lys187 participates in a covalent cross-link: Glycyl lysine isopeptide (Lys-Gly) (interchain with G-Cter in SUMO2). At Lys394 the chain carries N6-acetyllysine. Residues 406 to 426 form a disordered region; sequence VQLPREGQEDQGLTKDFSNSP. At Ser425 the chain carries Phosphoserine. One can recognise an RRM 4 domain in the interval 446–521; that stretch reads ATLHLSNIPP…HHLRVSFSKS (76 aa).

As to quaternary structure, interacts with THBS4 (via the acidic amphipathic C-terminus). Detected specifically in spleen, thymus, lungs, and bone marrow.

RNA-binding protein that mediates pre-mRNA alternative splicing regulation. Plays a role in the regulation of cell proliferation, differentiation and migration. Positive regulator of EPO-dependent erythropoiesis. Participates in cell differentiation regulation by repressing tissue-specific exons. Promotes Fas exon 6 skipping. Binds RNA, preferentially to both poly(G) and poly(U). The polypeptide is Polypyrimidine tract-binding protein 3 (Ptbp3) (Rattus norvegicus (Rat)).